A 286-amino-acid chain; its full sequence is Cytochrome c oxidase subunit 3 (286 aa).

Helical transmembrane passes span 13 to 33, 40 to 60, 85 to 105, 133 to 153, 173 to 195, 199 to 221, 223 to 243, and 253 to 273; these read GVFL…GVVI, VGTF…CFLI, IIQY…VVFF, IILD…NIIL, LCRE…LLFI, VWEF…LFSI, TLHF…IFNI, and IVLI…WFFL.

The protein belongs to the cytochrome c oxidase subunit 3 family. As to quaternary structure, component of the cytochrome c oxidase (complex IV, CIV), a multisubunit enzyme composed of a catalytic core of 3 subunits and several supernumerary subunits. The complex exists as a monomer or a dimer and forms supercomplexes (SCs) in the inner mitochondrial membrane with ubiquinol-cytochrome c oxidoreductase (cytochrome b-c1 complex, complex III, CIII).

Its subcellular location is the mitochondrion inner membrane. The enzyme catalyses 4 Fe(II)-[cytochrome c] + O2 + 8 H(+)(in) = 4 Fe(III)-[cytochrome c] + 2 H2O + 4 H(+)(out). Its function is as follows. Component of the cytochrome c oxidase, the last enzyme in the mitochondrial electron transport chain which drives oxidative phosphorylation. The respiratory chain contains 3 multisubunit complexes succinate dehydrogenase (complex II, CII), ubiquinol-cytochrome c oxidoreductase (cytochrome b-c1 complex, complex III, CIII) and cytochrome c oxidase (complex IV, CIV), that cooperate to transfer electrons derived from NADH and succinate to molecular oxygen, creating an electrochemical gradient over the inner membrane that drives transmembrane transport and the ATP synthase. Cytochrome c oxidase is the component of the respiratory chain that catalyzes the reduction of oxygen to water. Electrons originating from reduced cytochrome c in the intermembrane space (IMS) are transferred via the dinuclear copper A center (CU(A)) of subunit 2 and heme A of subunit 1 to the active site in subunit 1, a binuclear center (BNC) formed by heme A3 and copper B (CU(B)). The BNC reduces molecular oxygen to 2 water molecules using 4 electrons from cytochrome c in the IMS and 4 protons from the mitochondrial matrix. The chain is Cytochrome c oxidase subunit 3 (COIII) from Trypanoplasma borreli.